Consider the following 392-residue polypeptide: Cytochrome b (392 aa).

4 consecutive transmembrane segments (helical) span residues 38–58 (FGSLAGICLVIQIVTGVFLAM), 82–104 (WLLRYMHANGASMFLIVVHLHIF), 119–139 (VRCLGVVIFLLMIVTAFTGYV), and 185–205 (FFSLHHLLPFILVGASLLHLA). Heme b is bound by residues H88 and H102. Heme b is bound by residues H189 and H203. H208 provides a ligand contact to a ubiquinone. 4 helical membrane passes run 231–251 (FYVKDLVGWVAFAIFFSIWIF), 295–315 (SGGVAAIAPVFICLLALPFFK), 327–347 (IHQGIFWLLLADRLLLGWIGC), and 354–373 (FVTIGQIPPFVFFLFFAITP).

It belongs to the cytochrome b family. As to quaternary structure, the main subunits of complex b-c1 are: cytochrome b, cytochrome c1 and the Rieske protein. Requires heme b as cofactor.

It is found in the mitochondrion inner membrane. Component of the ubiquinol-cytochrome c reductase complex (complex III or cytochrome b-c1 complex) that is part of the mitochondrial respiratory chain. The b-c1 complex mediates electron transfer from ubiquinol to cytochrome c. Contributes to the generation of a proton gradient across the mitochondrial membrane that is then used for ATP synthesis. This chain is Cytochrome b (MT-CYB), found in Pisum sativum (Garden pea).